Reading from the N-terminus, the 326-residue chain is Serine protease 38 (326 aa).

An N-terminal signal peptide occupies residues 1-32 (MAAPASVMGPLGPSALGLLLLLLVVAPPRVAA). A propeptide spans 33-59 (LVHRQPENQGISLTGSVACGRPSMEGK) (activation peptide). The 234-residue stretch at 60 to 293 (ILGGVPAPER…FSKWICDNIE (234 aa)) folds into the Peptidase S1 domain. Cys-85 and Cys-101 are disulfide-bonded. The active-site Charge relay system is His-100. Residue Asn-125 is glycosylated (N-linked (GlcNAc...) asparagine). Residue Asp-150 is the Charge relay system of the active site. 3 cysteine pairs are disulfide-bonded: Cys-183–Cys-251, Cys-214–Cys-230, and Cys-241–Cys-269. Ser-245 acts as the Charge relay system in catalysis.

It belongs to the peptidase S1 family.

The protein localises to the secreted. This Homo sapiens (Human) protein is Serine protease 38 (PRSS38).